A 625-amino-acid polypeptide reads, in one-letter code: MSSQDQQQQQQPAQTQTSTSSSSNNENATTATSSIQQNVVADDSLLCQWEKCSERCPTPEALFDHICEKHVGRKSTNNLNLTCGWNSCRTTTVKRDHITSHIRVHVPLKPHKCEFCGKAFKRPQDLKKHVKTHADDSVLLRTPEQSGGSNGGYRQPGGKVIANLQHLAANPMGYYDHNASMHPGSAGVYGNSHHGGHSGYYAPAHSQQSSYGGGPGYYQMSHNPDLGQHAAWDEKKRNFDNLNDFFGAAKRRQIDAHSYQQVNQRLMQLQGIPIGTGGGISDYIHSAPQLVPIDGHGGHGHGGPMPQHQYSLPLPNLRTKSDLNSIDQFLEQMQSTVYESSNAAAAAGIHQPGAHYTHQALNFRQSHSPPQTHIHNIGSMAPHVSTSYASAPMTATHSSHSVSSGTPALTPPSSSVSYTSGNSPMSSSGMSPISRHSSTSNAAYPNLPAVTLGYSPHHSATAPTSTLGTNFDSDPRRRYSGGVLQRSAGGLNSSQYRESMETSTVGSPTPSPKETTPRPESIVKTEVTNNIDPALSDAGSPSVRSVDTLESARDRAEEAWIENIRVIEALRRYVSDRLQNGEYVKDEEDEDVSMADTDMQDTQVKTEEKPVESLYPVLKTDDDDE.

Positions 1–34 (MSSQDQQQQQQPAQTQTSTSSSSNNENATTATSS) are enriched in low complexity. The disordered stretch occupies residues 1 to 35 (MSSQDQQQQQQPAQTQTSTSSSSNNENATTATSSI). 3 C2H2-type zinc fingers span residues 45 to 70 (LLCQWEKCSERCPTPEALFDHICEKH), 81 to 105 (LTCGWNSCRTTTVKRDHITSHIRVH), and 111 to 133 (HKCEFCGKAFKRPQDLKKHVKTH). The segment covering 391–416 (APMTATHSSHSVSSGTPALTPPSSSV) has biased composition (polar residues). The tract at residues 391-440 (APMTATHSSHSVSSGTPALTPPSSSVSYTSGNSPMSSSGMSPISRHSSTS) is disordered. A compositionally biased stretch (low complexity) spans 417–438 (SYTSGNSPMSSSGMSPISRHSS). A YPX[LI] motif 1 motif is present at residues 444 to 447 (YPNL). Disordered stretches follow at residues 455–543 (SPHH…SPSV) and 584–625 (VKDE…DDDE). Polar residues-rich tracts occupy residues 461-472 (TAPTSTLGTNFD) and 490-514 (GLNSSQYRESMETSTVGSPTPSPKE). The short motif at 615–618 (YPVL) is the YPX[LI] motif 2 element.

This sequence belongs to the pacC/RIM101 family. Post-translationally, activated by C-terminal proteolytic cleavage by signaling protease (probably palB/RIM13) at neutral to alkaline ambient pH.

It is found in the cytoplasm. The protein localises to the nucleus. Its function is as follows. Transcription factor that mediates regulation of both acid- and alkaline-expressed genes in response to ambient pH. At alkaline ambient pH, activates transcription of alkaline-expressed genes (including pac1 itself) and represses transcription of acid-expressed genes. The chain is pH-response transcription factor pacC/RIM101 (pac1) from Sclerotinia sclerotiorum (White mold).